Consider the following 569-residue polypeptide: Proline--tRNA ligase (569 aa).

Belongs to the class-II aminoacyl-tRNA synthetase family. ProS type 1 subfamily. Homodimer.

Its subcellular location is the cytoplasm. It catalyses the reaction tRNA(Pro) + L-proline + ATP = L-prolyl-tRNA(Pro) + AMP + diphosphate. Its function is as follows. Catalyzes the attachment of proline to tRNA(Pro) in a two-step reaction: proline is first activated by ATP to form Pro-AMP and then transferred to the acceptor end of tRNA(Pro). As ProRS can inadvertently accommodate and process non-cognate amino acids such as alanine and cysteine, to avoid such errors it has two additional distinct editing activities against alanine. One activity is designated as 'pretransfer' editing and involves the tRNA(Pro)-independent hydrolysis of activated Ala-AMP. The other activity is designated 'posttransfer' editing and involves deacylation of mischarged Ala-tRNA(Pro). The misacylated Cys-tRNA(Pro) is not edited by ProRS. The sequence is that of Proline--tRNA ligase from Legionella pneumophila subsp. pneumophila (strain Philadelphia 1 / ATCC 33152 / DSM 7513).